Consider the following 400-residue polypeptide: Acetate kinase (400 aa).

Asparagine 10 is a Mg(2+) binding site. Lysine 17 lines the ATP pocket. Arginine 91 provides a ligand contact to substrate. Catalysis depends on aspartate 150, which acts as the Proton donor/acceptor. ATP-binding positions include 210–214, 285–287, and 333–337; these read HLGNG, DCR, and GIGEN. Residue glutamate 387 participates in Mg(2+) binding.

The protein belongs to the acetokinase family. In terms of assembly, homodimer. It depends on Mg(2+) as a cofactor. Mn(2+) is required as a cofactor.

It is found in the cytoplasm. It catalyses the reaction acetate + ATP = acetyl phosphate + ADP. The protein operates within metabolic intermediate biosynthesis; acetyl-CoA biosynthesis; acetyl-CoA from acetate: step 1/2. Catalyzes the formation of acetyl phosphate from acetate and ATP. Can also catalyze the reverse reaction. This Photorhabdus laumondii subsp. laumondii (strain DSM 15139 / CIP 105565 / TT01) (Photorhabdus luminescens subsp. laumondii) protein is Acetate kinase.